We begin with the raw amino-acid sequence, 526 residues long: Phosphoenolpyruvate carboxykinase (ATP) 2 (526 aa).

Substrate is bound by residues Arg55, Tyr190, and Lys196. Residues Lys196, His215, and 231–239 (GLSGTGKTT) contribute to the ATP site. Mn(2+) is bound by residues Lys196 and His215. Residue Asp252 participates in Mn(2+) binding. Positions 280, 317, and 442 each coordinate ATP. Arg317 is a substrate binding site.

This sequence belongs to the phosphoenolpyruvate carboxykinase (ATP) family. Mn(2+) is required as a cofactor.

Its subcellular location is the cytoplasm. It catalyses the reaction oxaloacetate + ATP = phosphoenolpyruvate + ADP + CO2. Its pathway is carbohydrate biosynthesis; gluconeogenesis. Its function is as follows. Involved in the gluconeogenesis. Catalyzes the conversion of oxaloacetate (OAA) to phosphoenolpyruvate (PEP) through direct phosphoryl transfer between the nucleoside triphosphate and OAA. The polypeptide is Phosphoenolpyruvate carboxykinase (ATP) 2 (Moorella thermoacetica (strain ATCC 39073 / JCM 9320)).